A 39-amino-acid chain; its full sequence is MTQQSNPNEQTVELNRTILYWGLLLIFVLAVLFSNYFFN.

The helical transmembrane segment at 18–38 threads the bilayer; sequence ILYWGLLLIFVLAVLFSNYFF.

It belongs to the PsbL family. PSII is composed of 1 copy each of membrane proteins PsbA, PsbB, PsbC, PsbD, PsbE, PsbF, PsbH, PsbI, PsbJ, PsbK, PsbL, PsbM, PsbT, PsbX, PsbY, PsbZ, Psb30/Ycf12, at least 3 peripheral proteins of the oxygen-evolving complex and a large number of cofactors. It forms dimeric complexes.

The protein resides in the plastid membrane. One of the components of the core complex of photosystem II (PSII). PSII is a light-driven water:plastoquinone oxidoreductase that uses light energy to abstract electrons from H(2)O, generating O(2) and a proton gradient subsequently used for ATP formation. It consists of a core antenna complex that captures photons, and an electron transfer chain that converts photonic excitation into a charge separation. This subunit is found at the monomer-monomer interface and is required for correct PSII assembly and/or dimerization. This Cuscuta pentagona (Five-angled dodder) protein is Photosystem II reaction center protein L.